A 431-amino-acid polypeptide reads, in one-letter code: Enolase (431 aa).

(2R)-2-phosphoglycerate is bound at residue glutamine 163. Residue glutamate 205 is the Proton donor of the active site. Mg(2+)-binding residues include aspartate 242, glutamate 288, and aspartate 315. The (2R)-2-phosphoglycerate site is built by lysine 340, arginine 369, serine 370, and lysine 391. Catalysis depends on lysine 340, which acts as the Proton acceptor.

It belongs to the enolase family. The cofactor is Mg(2+).

It localises to the cytoplasm. It is found in the secreted. Its subcellular location is the cell surface. It catalyses the reaction (2R)-2-phosphoglycerate = phosphoenolpyruvate + H2O. Its pathway is carbohydrate degradation; glycolysis; pyruvate from D-glyceraldehyde 3-phosphate: step 4/5. Catalyzes the reversible conversion of 2-phosphoglycerate (2-PG) into phosphoenolpyruvate (PEP). It is essential for the degradation of carbohydrates via glycolysis. The sequence is that of Enolase from Bacillus cereus (strain ZK / E33L).